The sequence spans 583 residues: Aspartyl protease APCB1 (583 aa).

Residues 83-103 traverse the membrane as a helical segment; that stretch reads LVLGLLGISLLAVAFYASVFP. A Peptidase A1 domain is found at 203-564; the sequence is YYTRILVGKP…DNVKRRIGWM (362 aa). Catalysis depends on residues aspartate 223 and aspartate 431.

It belongs to the peptidase A1 family. As to quaternary structure, interacts with BAG6 and BAGP1.

It is found in the membrane. Functionally, involved in proteolytic processing of BAG6 and plant basal immunity. The sequence is that of Aspartyl protease APCB1 from Arabidopsis thaliana (Mouse-ear cress).